The primary structure comprises 400 residues: Jasmonate-induced oxygenase 1 (400 aa).

One can recognise a Fe2OG dioxygenase domain in the interval 248–349; the sequence is DVGACLRVNY…RVSLAFFYNP (102 aa). Position 254 (R254) interacts with jasmonate. 2-oxoglutarate-binding residues include N256 and Y258. Residues H273, D275, and H330 each contribute to the Fe cation site. R340 and S342 together coordinate 2-oxoglutarate. Jasmonate is bound by residues R379 and R383.

The protein belongs to the iron/ascorbate-dependent oxidoreductase family. Requires L-ascorbate as cofactor. It depends on Fe(2+) as a cofactor.

The enzyme catalyses jasmonate + 2-oxoglutarate + O2 = (1R,2R)-12-hydroxyjasmonate + succinate + CO2. Functionally, 2-oxoglutarate-dependent dioxygenase involved in the oxidation of jasmonate (JA), a stress-induced phytohormone synthesized in response to attack by pathogens and herbivores, which triggers the activation of defense responses via the JA-mediated signaling pathway. Converts JA to 12-hydroxyjasmonate (12OH-JA), an inactive form of JA. Prevents over-accumulation of JA and indirectly its bioactive form JA-Ile under stress response. Acts as a negative regulator of JA-mediated defense signaling, by contributing to 12OH-JA accumulation, which represses JA defense responses upon infection by the fungal pathogen Botrytis cinerea and the herbivorous caterpillar Mamestra brassicae. The protein is Jasmonate-induced oxygenase 1 of Arabidopsis thaliana (Mouse-ear cress).